Consider the following 195-residue polypeptide: Thymidine kinase (195 aa).

Residues 15 to 22 (GSMFSGKS) and 88 to 91 (DEVQ) contribute to the ATP site. E89 acts as the Proton acceptor in catalysis. Residues C145, C148, C183, and C186 each contribute to the Zn(2+) site.

It belongs to the thymidine kinase family. As to quaternary structure, homotetramer.

The protein localises to the cytoplasm. The catalysed reaction is thymidine + ATP = dTMP + ADP + H(+). The sequence is that of Thymidine kinase from Bacillus cereus (strain ZK / E33L).